The following is a 201-amino-acid chain: Ras-related protein Ral-a (201 aa).

18–25 (GSGGVGKS) serves as a coordination point for GTP. The Effector region signature appears at 40–48 (YEPTKADSY). GTP contacts are provided by residues 65 to 69 (DTAGQ) and 124 to 127 (NKCD). A Cysteine methyl ester modification is found at C198. Residue C198 is the site of S-geranylgeranyl cysteine attachment. The propeptide at 199–201 (TLL) is removed in mature form.

It belongs to the small GTPase superfamily. Ras family.

It is found in the cell membrane. The protein resides in the cleavage furrow. It localises to the midbody. Its subcellular location is the midbody ring. The enzyme catalyses GTP + H2O = GDP + phosphate + H(+). The protein is Ras-related protein Ral-a (Rala) of Drosophila melanogaster (Fruit fly).